A 361-amino-acid polypeptide reads, in one-letter code: Cysteine-rich with EGF-like domain protein 2-A (361 aa).

Positions 1–24 are cleaved as a signal peptide; it reads MNGSRALHLSAWLLLCLLCSAAVA. In terms of domain architecture, EGF-like 1 spans 134–176; that stretch reads DCLACLGGSERPCHGNGFCNGDGTRSGDGLCRCEAEYTGPFCL. Disulfide bonds link C138–C152, C146–C164, and C166–C175. The N-linked (GlcNAc...) asparagine glycan is linked to N188. FU repeat units lie at residues 191 to 238 and 251 to 298; these read YSLC…EESP and SFLC…SEQV. The 42-residue stretch at 288–329 folds into the EGF-like 2; calcium-binding domain; it reads DVDECDASEQVCSRENETCLNTAGSYKCTCSEGFEDKEGNCV. 3 cysteine pairs are disulfide-bonded: C292–C306, C299–C315, and C317–C328. N303 carries N-linked (GlcNAc...) asparagine glycosylation. The disordered stretch occupies residues 341 to 361; it reads DGEMGTSASDINISNTAHEDL. Residues 346 to 361 show a composition bias toward polar residues; it reads TSASDINISNTAHEDL. A glycan (N-linked (GlcNAc...) asparagine) is linked at N352.

The protein belongs to the CRELD family.

It localises to the secreted. The protein resides in the endoplasmic reticulum. Its function is as follows. Possible role in neuronal acetylcholine receptor transport. The polypeptide is Cysteine-rich with EGF-like domain protein 2-A (creld2-a) (Xenopus laevis (African clawed frog)).